The primary structure comprises 345 residues: MQVQVQEGQTACDGSLRPLPSAGPASFVPRSLRPAPLRGTSTPDRYSRIEKVGEGSYGIVYKCHDNFTGRTVAMKRIPLIVNDGGVPSTAVREVSLLRELNHPYVVRLLDVVLHEAKLLLIFEYMEQDLQGMLKQRNTAFVGGKLRRIMFQLLLGLHECHSRRFVHRDIKPSNILIDRKESVVKLADFGLGRAFRVPLQTYTTEVMTLWYRAPEVLLGDKQYLPAVDVWSMGCVFAELARRRSLFAGDTAINQLFSIFQLLGTPTEATWRGVTSLPHHNVNFPRWTAKPLRTAVPALDDDGVDLLRRMLCYNPRERITAYEALQHSYFDEVREEEVEKLMRFNGA.

The tract at residues 1 to 44 is disordered; it reads MQVQVQEGQTACDGSLRPLPSAGPASFVPRSLRPAPLRGTSTPD. The Protein kinase domain maps to 46–328; the sequence is YSRIEKVGEG…AYEALQHSYF (283 aa). ATP is bound by residues 52–60 and Lys75; that span reads VGEGSYGIV. Ser56 carries the post-translational modification Phosphoserine. Tyr57 carries the post-translational modification Phosphotyrosine. Asp168 (proton acceptor) is an active-site residue.

The protein belongs to the protein kinase superfamily. CMGC Ser/Thr protein kinase family. CDC2/CDKX subfamily. Forms a stable but non-covalent complex with a regulatory subunit and with a cyclin.

It catalyses the reaction L-seryl-[protein] + ATP = O-phospho-L-seryl-[protein] + ADP + H(+). It carries out the reaction L-threonyl-[protein] + ATP = O-phospho-L-threonyl-[protein] + ADP + H(+). Its activity is regulated as follows. Phosphorylation at Ser-56 or Tyr-57 inactivates the enzyme. Its function is as follows. Probably involved in the control of the cell cycle. The chain is Cell division control protein 2 homolog 2 (CRK2) from Trypanosoma brucei brucei.